An 80-amino-acid chain; its full sequence is uncharacterized protein (80 aa).

This is an uncharacterized protein from Synechococcus sp. (strain PCC 6716).